We begin with the raw amino-acid sequence, 611 residues long: Oxidoreductase cicC (611 aa).

The first 20 residues, 1–20 (MALRYLNKFSLLSLAVPTLA), serve as a signal peptide directing secretion. Residues 45–46 (NA) and 65–66 (EA) each bind FAD. 2 N-linked (GlcNAc...) asparagine glycosylation sites follow: asparagine 76 and asparagine 113. Residues valine 123 and 131–134 (NLMT) contribute to the FAD site. Residues asparagine 282, asparagine 410, and asparagine 475 are each glycosylated (N-linked (GlcNAc...) asparagine). The active-site Proton acceptor is the histidine 547. Residue histidine 547 is the Proton donor of the active site. Alanine 581 is a binding site for FAD. Histidine 591 functions as the Proton acceptor in the catalytic mechanism. FAD is bound at residue 592–593 (PI).

The protein belongs to the GMC oxidoreductase family. It depends on FAD as a cofactor.

It functions in the pathway phytotoxin biosynthesis. In terms of biological role, oxidoreductase; part of the gene cluster that mediates the biosynthesis of cichorine, a phytotoxin active against knapweed, corn, and soybeans. The first step in the pathway is performed by the non-reducing polyketide synthase pkbA that condenses one acetyl-CoA starter unit with 3 malonyl-CoA units. PkbA also catalyzes one methylation step to produce 3-methylorsellinate. The nonribosomal peptide synthase-like protein cicB, the cytochrome P450 monooxygenase cicH and the O-methyltransferase cicE are involved in the conversion of 3-methylorsellinate into nidulol. CicB converts 3-methylorsellinate to a yet unidentified intermediate, cicH may play a ring-closing role for cichorine and cicE is plausibly responsible for the methylation of one of the phenol groups. The oxidoreductase cicC acts downstream with still unidentified enzymes to further convert nidulol into cichorine. This is Oxidoreductase cicC from Emericella nidulans (strain FGSC A4 / ATCC 38163 / CBS 112.46 / NRRL 194 / M139) (Aspergillus nidulans).